The sequence spans 692 residues: Protein arginine N-methyltransferase 7 (692 aa).

2 SAM-dependent MTase PRMT-type domains span residues 14 to 359 (ENSW…YSLW) and 368 to 692 (AKTV…QEKR).

The protein belongs to the class I-like SAM-binding methyltransferase superfamily. Protein arginine N-methyltransferase family. PRMT7 subfamily.

Functionally, essential arginine methyltransferase that can both catalyze the formation of omega-N monomethylarginine (MMA) and symmetrical dimethylarginine (sDMA). Specifically mediates the symmetrical dimethylation of arginine residues in the small nuclear ribonucleoproteins SmD1 and SmD3. This chain is Protein arginine N-methyltransferase 7 (Art7), found in Drosophila pseudoobscura pseudoobscura (Fruit fly).